Reading from the N-terminus, the 684-residue chain is Protein-glutamine gamma-glutamyltransferase 4 (684 aa).

Residues Cys268, His327, and Asp350 contribute to the active site. Asn390, Asp392, Glu442, and Glu447 together coordinate Ca(2+).

The protein belongs to the transglutaminase superfamily. Transglutaminase family. Homodimer. It depends on Ca(2+) as a cofactor. As to expression, prostate.

It carries out the reaction L-glutaminyl-[protein] + L-lysyl-[protein] = [protein]-L-lysyl-N(6)-5-L-glutamyl-[protein] + NH4(+). Its function is as follows. Associated with the mammalian reproductive process. Catalyzes the cross-linking of proteins and the conjugation of polyamines to specific proteins in the seminal tract. The chain is Protein-glutamine gamma-glutamyltransferase 4 (TGM4) from Homo sapiens (Human).